The following is a 161-amino-acid chain: MHNLLALWQQRTRRERCLLLGMAVVLLIGLVYYTLWQPWQNREAQWRQTLAREQASLQWMRQQTPLIRQLRNQKPPTAPEEPSTVIMREAARHGLTIVRLQPQGSRLSLTVQPADFQALMAWLDALGQAGMTTATLAVTAVAQQPGWVTVNTLVLERSDEK.

Residues 1 to 16 (MHNLLALWQQRTRRER) are Cytoplasmic-facing. The helical transmembrane segment at 17–36 (CLLLGMAVVLLIGLVYYTLW) threads the bilayer. Residues 37 to 161 (QPWQNREAQW…TLVLERSDEK (125 aa)) are Periplasmic-facing.

It belongs to the GSP M family. In terms of assembly, type II secretion system is composed of four main components: the outer membrane complex, the inner membrane complex, the cytoplasmic secretion ATPase and the periplasm-spanning pseudopilus. Forms homodimers. Interacts with PulL/GspL. Interacts with PulE/GspE and PulF/GspF.

The protein localises to the cell inner membrane. Inner membrane component of the type II secretion system required for the energy-dependent secretion of extracellular factors such as proteases and toxins from the periplasm. Plays a role in the complex assembly and recruits PulL resulting in a stable complex in the inner membrane. Provides thus a link between the energy-providing PulE protein in the cytoplasm and the rest of the T2SS machinery. The sequence is that of Type II secretion system protein M (pulM) from Klebsiella pneumoniae.